A 758-amino-acid polypeptide reads, in one-letter code: Microtubule-associated protein tau (758 aa).

Positions 1–26 (MAEPRQEFEVMEDHAGTYGLGDRKDQ) are enriched in basic and acidic residues. The disordered stretch occupies residues 1–573 (MAEPRQEFEV…PVPMPDLKNV (573 aa)). Alanine 2 is subject to N-acetylalanine. Tyrosine 18 carries the post-translational modification Phosphotyrosine; by FYN. At tyrosine 29 the chain carries Phosphotyrosine. Lysine 44 participates in a covalent cross-link: Glycyl lysine isopeptide (Lys-Gly) (interchain with G-Cter in ubiquitin). Serine 46 and serine 61 each carry phosphoserine. Positions 61 to 71 (SETSDAKSTPT) are enriched in polar residues. Phosphothreonine is present on residues threonine 69 and threonine 71. Lysine 87 is a glycosylation site (N-linked (Glc) (glycation) lysine; in PHF-tau; in vitro). At threonine 111 the chain carries Phosphothreonine. Basic and acidic residues-rich tracts occupy residues 179 to 189 (EGGRHAPELLK) and 207 to 216 (GGKERPGSKE). At serine 214 the chain carries Phosphoserine; by SGK1. The span at 217–228 (EVDEDRDVDESS) shows a compositional bias: acidic residues. Residues 314–323 (EQAHSEEHLG) show a composition bias toward basic and acidic residues. A compositionally biased stretch (low complexity) spans 324–340 (RAAFPGAPGEGPEARGP). Basic and acidic residues-rich tracts occupy residues 344 to 356 (EDTK…EPSE) and 381 to 393 (KSKD…DKKA). The N-linked (Glc) (glycation) lysine; in PHF-tau; in vitro glycan is linked to lysine 383. The span at 442–453 (VSSVTSRTGSSG) shows a compositional bias: low complexity. Positions 455-466 (KEMKLKGADGKT) are enriched in basic and acidic residues. Lysine 467 carries an N-linked (Glc) (glycation) lysine; in PHF-tau; in vitro glycan. At threonine 470 the chain carries Phosphothreonine; by PDPK1. Position 472 is an omega-N-methylarginine (arginine 472). N-linked (Glc) (glycation) lysine; in PHF-tau; in vitro glycosylation is present at lysine 480. An N6,N6-dimethyllysine; alternate modification is found at lysine 480. Residue lysine 480 is modified to N6-acetyllysine; alternate. Deamidated asparagine; in tau and PHF-tau; partial is present on asparagine 484. The residue at position 486 (threonine 486) is a Phosphothreonine. A glycan (N-linked (Glc) (glycation) lysine; in PHF-tau; in vitro) is linked at lysine 491. A compositionally biased stretch (pro residues) spans 491–503 (KTPPAPKTPPSSG). Phosphothreonine is present on threonine 492. Threonine 498 is subject to Phosphothreonine; by PDPK1. Phosphoserine occurs at positions 502, 508, and 512. The span at 504–531 (EPPKSGDRSGYSSPGSPGTPGSRSRTPS) shows a compositional bias: low complexity. Tyrosine 514 is subject to Phosphotyrosine; by TTBK1. Residues serine 515 and serine 516 each carry the phosphoserine; by PDPK1 and TTBK1 modification. Residue serine 519 is modified to Phosphoserine; by CK1, PDPK1 and TTBK1. Threonine 522 is modified (phosphothreonine; by CK1 and PDPK1). Serine 525 carries an O-linked (GlcNAc) serine glycan. Threonine 529 is modified (phosphothreonine; by BRSK1, BRSK2, DYRK2 and PDPK1). The residue at position 531 (serine 531) is a Phosphoserine; by PKA. Residue threonine 534 is modified to Phosphothreonine; by PDPK1. Residue lysine 542 is glycosylated (N-linked (Glc) (glycation) lysine; in PHF-tau; in vitro). Lysine 542 carries the post-translational modification N6-acetyllysine. At threonine 548 the chain carries Phosphothreonine; by GSK3-beta and PDPK1. The N-linked (Glc) (glycation) lysine; in PHF-tau; in vitro glycan is linked to lysine 551. Residue serine 552 is modified to Phosphoserine; by PDPK1. Serine 554 carries the post-translational modification Phosphoserine; by PHK. The O-linked (GlcNAc) serine glycan is linked to serine 555. Tau/MAP repeat units lie at residues 561–591 (QTAP…GGGK), 592–622 (VQII…GGGS), 623–653 (VQIV…GGGQ), and 654–685 (VEVK…GGGN). Residues 561–685 (QTAPVPMPDL…NITHVPGGGN (125 aa)) are microtubule-binding domain. Residue lysine 571 forms a Glycyl lysine isopeptide (Lys-Gly) (interchain with G-Cter in ubiquitin); in PHF-tau linkage. Lysine 576 carries N-linked (Glc) (glycation) lysine; in PHF-tau; in vitro glycosylation. Lysine 576 is modified (N6-acetyllysine; alternate). Position 576 is an N6-methyllysine; alternate (lysine 576). Lysine 576 participates in a covalent cross-link: Glycyl lysine isopeptide (Lys-Gly) (interchain with G-Cter in ubiquitin); alternate. Phosphoserine; by MARK1, MARK2, MARK3, MARK4, BRSK1, BRSK2 and PHK is present on serine 579. Residue lysine 584 forms a Glycyl lysine isopeptide (Lys-Gly) (interchain with G-Cter in ubiquitin) linkage. Asparagine 596 carries the post-translational modification Deamidated asparagine; in tau and PHF-tau; partial. 2 N-linked (Glc) (glycation) lysine; in PHF-tau; in vitro glycosylation sites follow: lysine 597 and lysine 598. Residue lysine 598 is modified to N6-acetyllysine; alternate. Lysine 598 participates in a covalent cross-link: Glycyl lysine isopeptide (Lys-Gly) (interchain with G-Cter in ubiquitin); alternate. Serine 602 is subject to Phosphoserine; by PHK. The residue at position 607 (lysine 607) is an N6-acetyllysine. The cysteines at positions 608 and 639 are disulfide-linked. Serine 610 bears the Phosphoserine mark. Position 615 is an N6-acetyllysine; alternate (lysine 615). Lysine 615 is covalently cross-linked (Glycyl lysine isopeptide (Lys-Gly) (interchain with G-Cter in ubiquitin); alternate). Serine 622 bears the Phosphoserine; by PHK mark. Lysine 628 is modified (N6,N6-dimethyllysine; alternate). 3 positions are modified to N6-acetyllysine; alternate: lysine 628, lysine 634, and lysine 638. Residue lysine 628 forms a Glycyl lysine isopeptide (Lys-Gly) (interchain with G-Cter in ubiquitin); in PHF-tau linkage. Glycyl lysine isopeptide (Lys-Gly) (interchain with G-Cter in ubiquitin); alternate cross-links involve residues lysine 634 and lysine 638. Serine 641 is subject to Phosphoserine. N6-acetyllysine; alternate occurs at positions 648, 660, and 664. Residues lysine 648, lysine 660, and lysine 664 each participate in a glycyl lysine isopeptide (Lys-Gly) (interchain with G-Cter in ubiquitin); alternate cross-link. Lysine 664 is a glycosylation site (N-linked (Glc) (glycation) lysine; in PHF-tau; in vitro). Arginine 666 carries the omega-N-methylarginine modification. At serine 669 the chain carries Phosphoserine; by PHK. An N-linked (Glc) (glycation) lysine; in PHF-tau; in vitro glycan is attached at lysine 670. Lysine 670 participates in a covalent cross-link: Glycyl lysine isopeptide (Lys-Gly) (interchain with G-Cter in ubiquitin); in PHF-tau. At serine 673 the chain carries Phosphoserine. An N-linked (Glc) (glycation) lysine; in PHF-tau; in vitro glycan is attached at lysine 686. At lysine 686 the chain carries N6-acetyllysine; alternate. Lysine 686 participates in a covalent cross-link: Glycyl lysine isopeptide (Lys-Gly) (interchain with G-Cter in ubiquitin); alternate. A Glycyl lysine isopeptide (Lys-Gly) (interchain with G-Cter in ubiquitin) cross-link involves residue lysine 692. N6-acetyllysine; alternate is present on lysine 702. Lysine 702 is covalently cross-linked (Glycyl lysine isopeptide (Lys-Gly) (interchain with G-Cter in ubiquitin); alternate). The residue at position 711 (tyrosine 711) is a Phosphotyrosine. Serine 713 bears the Phosphoserine; by CK1 and PDPK1 mark. Positions 715–734 (VVSGDTSPRHLSNVSSTGSI) are disordered. Serine 717 bears the Phosphoserine; alternate mark. O-linked (GlcNAc) serine; alternate glycosylation occurs at serine 717. The span at 718-733 (GDTSPRHLSNVSSTGS) shows a compositional bias: polar residues. Residue threonine 720 is modified to Phosphothreonine. Serine 721 is modified (phosphoserine; by CK1 and PDPK1). Serine 726 bears the Phosphoserine mark. At serine 733 the chain carries Phosphoserine; by CaMK2 and TTBK1. Serine 739 is subject to Phosphoserine; by PDPK1 and TTBK1. Phosphothreonine; by TTBK1 is present on threonine 744.

Interacts with MARK1, MARK2, MARK3 and MARK4. Interacts with PSMC2 through SQSTM1. Interacts with SQSTM1 when polyubiquitinated. Interacts with FKBP4. Binds to CSNK1D. Interacts with SGK1. Interacts with EPM2A; the interaction dephosphorylates MAPT at Ser-396. Interacts with PIN1. Interacts with LRRK2. Interacts with LRP1, leading to endocytosis; this interaction is reduced in the presence of LRPAP1/RAP. Phosphorylation at serine and threonine residues in S-P or T-P motifs by proline-directed protein kinases (PDPK1, CDK1, CDK5, GSK3, MAPK) (only 2-3 sites per protein in interphase, seven-fold increase in mitosis, and in the form associated with paired helical filaments (PHF-tau)), and at serine residues in K-X-G-S motifs by MAP/microtubule affinity-regulating kinase (MARK1, MARK2, MARK3 or MARK4), causing detachment from microtubules, and their disassembly. Phosphorylation decreases with age. Phosphorylation within tau/MAP's repeat domain or in flanking regions seems to reduce tau/MAP's interaction with, respectively, microtubules or plasma membrane components. Phosphorylation on Ser-610, Ser-622, Ser-641 and Ser-673 in several isoforms during mitosis. Phosphorylation at Ser-548 by GSK3B reduces ability to bind and stabilize microtubules. Phosphorylation at Ser-579 by BRSK1 and BRSK2 in neurons affects ability to bind microtubules and plays a role in neuron polarization. Phosphorylated at Ser-554, Ser-579, Ser-602, Ser-606 and Ser-669 by PHK. Phosphorylation at Ser-214 by SGK1 mediates microtubule depolymerization and neurite formation in hippocampal neurons. There is a reciprocal down-regulation of phosphorylation and O-GlcNAcylation. Phosphorylation on Ser-717 completely abolishes the O-GlcNAcylation on this site, while phosphorylation on Ser-713 and Ser-721 reduces glycosylation by a factor of 2 and 4 respectively. Phosphorylation on Ser-721 is reduced by about 41.5% by GlcNAcylation on Ser-717. Dephosphorylated at several serine and threonine residues by the serine/threonine phosphatase PPP5C. In terms of processing, polyubiquitinated. Requires functional TRAF6 and may provoke SQSTM1-dependent degradation by the proteasome. PHF-tau can be modified by three different forms of polyubiquitination. 'Lys-48'-linked polyubiquitination is the major form, 'Lys-6'-linked and 'Lys-11'-linked polyubiquitination also occur. Post-translationally, O-glycosylated. O-GlcNAcylation content is around 8.2%. There is reciprocal down-regulation of phosphorylation and O-GlcNAcylation. Phosphorylation on Ser-717 completely abolishes the O-GlcNAcylation on this site, while phosphorylation on Ser-713 and Ser-721 reduces O-GlcNAcylation by a factor of 2 and 4 respectively. O-GlcNAcylation on Ser-717 decreases the phosphorylation on Ser-721 by about 41.5%. Glycation of PHF-tau, but not normal brain TAU/MAPT. Glycation is a non-enzymatic post-translational modification that involves a covalent linkage between a sugar and an amino group of a protein molecule forming ketoamine. Subsequent oxidation, fragmentation and/or cross-linking of ketoamine leads to the production of advanced glycation endproducts (AGES). Glycation may play a role in stabilizing PHF aggregation leading to tangle formation in AD. In terms of tissue distribution, expressed in neurons. Isoform PNS-tau is expressed in the peripheral nervous system while the others are expressed in the central nervous system.

The protein resides in the cytoplasm. Its subcellular location is the cytosol. It localises to the cell membrane. The protein localises to the cytoskeleton. It is found in the cell projection. The protein resides in the axon. Its subcellular location is the dendrite. It localises to the secreted. Its function is as follows. Promotes microtubule assembly and stability, and might be involved in the establishment and maintenance of neuronal polarity. The C-terminus binds axonal microtubules while the N-terminus binds neural plasma membrane components, suggesting that tau functions as a linker protein between both. Axonal polarity is predetermined by TAU/MAPT localization (in the neuronal cell) in the domain of the cell body defined by the centrosome. The short isoforms allow plasticity of the cytoskeleton whereas the longer isoforms may preferentially play a role in its stabilization. The polypeptide is Microtubule-associated protein tau (Homo sapiens (Human)).